The sequence spans 172 residues: Protein/nucleic acid deglycase 2 (172 aa).

Positions K3 to G171 constitute a PfpI endopeptidase domain. Residue C104 is the Nucleophile of the active site.

The protein belongs to the peptidase C56 family. Exists in monomeric, trimeric, and hexameric forms.

The protein resides in the cytoplasm. The catalysed reaction is N(omega)-(1-hydroxy-2-oxopropyl)-L-arginyl-[protein] + H2O = lactate + L-arginyl-[protein] + H(+). It catalyses the reaction N(6)-(1-hydroxy-2-oxopropyl)-L-lysyl-[protein] + H2O = lactate + L-lysyl-[protein] + H(+). It carries out the reaction S-(1-hydroxy-2-oxopropyl)-L-cysteinyl-[protein] + H2O = lactate + L-cysteinyl-[protein] + H(+). The enzyme catalyses N(omega)-(1-hydroxy-2-oxoethyl)-L-arginyl-[protein] + H2O = L-arginyl-[protein] + glycolate + H(+). The catalysed reaction is N(6)-(1-hydroxy-2-oxoethyl)-L-lysyl-[protein] + H2O = glycolate + L-lysyl-[protein] + H(+). It catalyses the reaction S-(1-hydroxy-2-oxoethyl)-L-cysteinyl-[protein] + H2O = glycolate + L-cysteinyl-[protein] + H(+). It carries out the reaction N(2)-(1-hydroxy-2-oxopropyl)-dGTP + H2O = lactate + dGTP + H(+). The enzyme catalyses N(2)-(1-hydroxy-2-oxopropyl)-GTP + H2O = lactate + GTP + H(+). The catalysed reaction is N(2)-(1-hydroxy-2-oxopropyl)-GDP + H2O = lactate + GDP + H(+). It catalyses the reaction N(2)-(1-hydroxy-2-oxopropyl)-GMP + H2O = lactate + GMP + H(+). It carries out the reaction N(2)-(1-hydroxy-2-oxoethyl)-dGTP + H2O = dGTP + glycolate + H(+). The enzyme catalyses N(2)-(1-hydroxy-2-oxoethyl)-GTP + H2O = glycolate + GTP + H(+). The catalysed reaction is N(2)-(1-hydroxy-2-oxoethyl)-GDP + H2O = glycolate + GDP + H(+). It catalyses the reaction N(2)-(1-hydroxy-2-oxoethyl)-GMP + H2O = glycolate + GMP + H(+). It carries out the reaction an N(2)-(1-hydroxy-2-oxopropyl)-guanosine in RNA + H2O = a guanosine in RNA + lactate + H(+). The enzyme catalyses an N(2)-(1-hydroxy-2-oxopropyl)-2'-deoxyguanosine in DNA + H2O = a 2'-deoxyguanosine in DNA + lactate + H(+). The catalysed reaction is an N(2)-(1-hydroxy-2-oxoethyl)-guanosine in RNA + H2O = a guanosine in RNA + glycolate + H(+). It catalyses the reaction an N(2)-(1-hydroxy-2-oxoethyl)-2'-deoxyguanosine in DNA + H2O = a 2'-deoxyguanosine in DNA + glycolate + H(+). With respect to regulation, glyoxalase activity is inhibited by zinc ions at pH 7.0. Functionally, protein and nucleotide deglycase that catalyzes the deglycation of the Maillard adducts formed between amino groups of proteins or nucleotides and reactive carbonyl groups of glyoxals. Thus, functions as a protein deglycase that repairs methylglyoxal- and glyoxal-glycated proteins, and releases repaired proteins and lactate or glycolate, respectively. Deglycates cysteine, arginine and lysine residues in proteins, and thus reactivates these proteins by reversing glycation by glyoxals. Is able to repair glycated serum albumin, collagen, glyceraldehyde-3-phosphate dehydrogenase, and fructose biphosphate aldolase. Acts on early glycation intermediates (hemithioacetals and aminocarbinols), preventing the formation of advanced glycation endproducts (AGE) that cause irreversible damage. Also functions as a nucleotide deglycase able to repair glycated guanine in the free nucleotide pool (GTP, GDP, GMP, dGTP) and in DNA and RNA. Is thus involved in a major nucleotide repair system named guanine glycation repair (GG repair), dedicated to reversing methylglyoxal and glyoxal damage via nucleotide sanitization and direct nucleic acid repair. In vitro, prevents acrylamide formation in asparagine/glyoxal and asparagine/sugar mixtures at 55 degrees Celsius, likely by degrading asparagine/glyoxal Maillard adducts formed at high temperatures. Also displays an apparent glyoxalase activity that in fact reflects its deglycase activity. Is a general stress protein; is required for the protection of bacterial cells against many environmental stresses, including oxidative, thermal, osmotic, UV, and pH stresses. And plays an important role in protection against electrophile/carbonyl stress. In Escherichia coli (strain K12), this protein is Protein/nucleic acid deglycase 2 (yhbO).